Here is a 273-residue protein sequence, read N- to C-terminus: Large ribosomal subunit protein uL2 (273 aa).

Positions 221–263 (RGTAMNPVDHPHGGGEGRNFGKHPVSPWGLQTKGKKTRKNKRT) are disordered. Residues 253-263 (KGKKTRKNKRT) show a composition bias toward basic residues.

Belongs to the universal ribosomal protein uL2 family. As to quaternary structure, part of the 50S ribosomal subunit. Forms a bridge to the 30S subunit in the 70S ribosome.

One of the primary rRNA binding proteins. Required for association of the 30S and 50S subunits to form the 70S ribosome, for tRNA binding and peptide bond formation. It has been suggested to have peptidyltransferase activity; this is somewhat controversial. Makes several contacts with the 16S rRNA in the 70S ribosome. This is Large ribosomal subunit protein uL2 from Buchnera aphidicola subsp. Baizongia pistaciae (strain Bp).